The chain runs to 380 residues: Peroxisomal membrane protein PEX13 (380 aa).

The disordered stretch occupies residues 1 to 30 (MSDSSAPDLPSKPSSLNAGQSSSLQTTNTG). The Lumenal segment spans residues 1 to 230 (MSDSSAPDLP…NKNTNKLSLK (230 aa)). Residues 12 to 30 (KPSSLNAGQSSSLQTTNTG) are compositionally biased toward polar residues. A helical transmembrane segment spans residues 231–251 (PLLLFLAAVVGFPYLLKKLIA). The Cytoplasmic portion of the chain corresponds to 252 to 380 (HLAETSQMNG…DSTEFQKMKT (129 aa)). In terms of domain architecture, SH3 spans 277–344 (TKLEFARALY…PYNYVEIIER (68 aa)).

The protein belongs to the peroxin-13 family. Interacts (via SH3 domain) with PEX14 (via SH3-binding motif); forming the PEX13-PEX14 docking complex.

The protein resides in the peroxisome membrane. Functionally, component of the PEX13-PEX14 docking complex, a translocon channel that specifically mediates the import of peroxisomal cargo proteins bound to PEX5 receptor. The PEX13-PEX14 docking complex forms a large import pore which can be opened to a diameter of about 9 nm. Mechanistically, PEX5 receptor along with cargo proteins associates with the PEX14 subunit of the PEX13-PEX14 docking complex in the cytosol, leading to the insertion of the receptor into the organelle membrane with the concomitant translocation of the cargo into the peroxisome matrix. The protein is Peroxisomal membrane protein PEX13 (PEX13) of Komagataella pastoris (Yeast).